A 99-amino-acid chain; its full sequence is UPF0751 protein BCE_A0020 (99 aa).

Belongs to the UPF0751 family.

The sequence is that of UPF0751 protein BCE_A0020 from Bacillus cereus (strain ATCC 10987 / NRS 248).